Consider the following 239-residue polypeptide: Ribosomal RNA small subunit methyltransferase G (239 aa).

Residues Gly78, Phe83, 129–130, and Arg148 contribute to the S-adenosyl-L-methionine site; that span reads AE.

It belongs to the methyltransferase superfamily. RNA methyltransferase RsmG family.

The protein resides in the cytoplasm. Its function is as follows. Specifically methylates the N7 position of a guanine in 16S rRNA. This is Ribosomal RNA small subunit methyltransferase G from Alkaliphilus oremlandii (strain OhILAs) (Clostridium oremlandii (strain OhILAs)).